Consider the following 1322-residue polypeptide: MNISKFFLIFIPLVLFKYPANNELINYNVILKYDVKDLFKRVLQEQNEDIKDDNDENDEGDEEDEYYSYLKNRGTNEFDKVKYKYAEYVRFSIFKSKNIYTHIFNELLVFLGAQYGTEEEIVVHVKLIDILSLLFTHYKDNLSKFGHILNSFQDRSKLMNSVENEFMNEFINERDNYIYDVKNAYNKSDNNDDEWIETVLNKKNMLYDKFLKEWRIDGSNFYSIHNKKKTYLPKKVFQNKQNYIPDFENMEHVDLVCKPISDSAIDEKSAEKYEDKELNINEQNEQSNSKKEQTGNDNVSETKMHKEESSDSSNKTDESNVCKSENKYIKKTNNNKKIKEERHGFIYKMRNDFFLSDASLNVISLINSITSNEENKIVKKLYTGLKKLKITTFDNLIRYTNIIGIFFSYDIFDELYLQIKLIKEYFGLIPRNNDELSIVSKSKNVSKIKVYGKYNITDDEMFVPPVCLSAYCKLRSVWMQNRDFNFKIEKYSSNSINFMTLGDIGRGFKKENSYDEEQMLKLIGFNELKSTSNAMKDWHASNNADFVINLGDNVPEVDELDYLKNFEWHKIMRELFTFRKQDEDEEKNDADSYSITKDNIQEFYKEVEKQMNNTNTDDKNQHNDISTTPINNYTDGNEGNNNSENNNGFREYINDNTKDYNIYKNETTEKEETYDSIPFFSIFGEKDYFYFPSEQIQEHYAKRIPGYFFPNNYYRINYDFVYNNKEKNGVQEKFKASFIFIDTWSLMIGFPIIRNYRSFREQFNWINKALLESAKESDWIFVVGHHPFISSGRRSDNYSFEELSFHNIIRNFFFYYNIDGYFSAHDNLMEYLNFGPLNLFVNGSSSRVLFDKSTILGRGYFGKMVGSIYPVTCYLLTTIHSALRPKGCDISKYSKWSNKYDIGFSAHKLSKDELVTEFINSRSGKPVSQKIVIKNKKDKRRKFYDLDGYTNDKIKQFENKIYEFSSKNPNFIKYKIEEFKENDKKLNIIMNNLKSEEEKDAFRSLMFLNNLIFGISSHISNISFDQLKLMCYLANKYRTFFNKKLIKFLGEELKIAVQKMEVKTTNETPHNSNEILNTNENESIQPNDPTMKVEQIMELIDTLGYKPDEFLEKYDAMTQEEKDALKEKLGNDVSLEDYLSKVKMYIHKKKLSAEELKEYEENEENIKIAEVPDESKEDDNTNSQPEDTIDQENKDDINDIINAPNEVHKNYKELVEKEKKLTENEHALLMLSSLKTYDEMKYSLNILSKKEVIKEEAHPYGLYYIEKHKTFFQVSLELCPDIKRIISNLGKVGTKLAFYDYINNLYNKIMDLKNSIDKIAIF.

Positions 1-22 (MNISKFFLIFIPLVLFKYPANN) are cleaved as a signal peptide. An interaction with phosphorylated eIF2alpha region spans residues 1 to 535 (MNISKFFLIF…NELKSTSNAM (535 aa)). Basic and acidic residues-rich tracts occupy residues 267–279 (EKSA…KELN) and 288–326 (NSKK…KSEN). Disordered stretches follow at residues 267–326 (EKSA…KSEN), 613–646 (NTNT…SENN), 1066–1087 (NETP…IQPN), and 1170–1196 (EVPD…NKDD). The segment covering 631–646 (NNYTDGNEGNNNSENN) has biased composition (low complexity).

The cofactor is Mn(2+).

The enzyme catalyses O-phospho-L-seryl-[protein] + H2O = L-seryl-[protein] + phosphate. Its function is as follows. Protein phosphatase which dephosphorylates 'Ser-59' of translation factor eIF2alpha during the liver stage, thus enabling protein translation. The chain is Serine/threonine-protein phosphatase UIS2 from Plasmodium berghei (strain Anka).